Consider the following 493-residue polypeptide: Glutamyl-tRNA(Gln) amidotransferase subunit A (493 aa).

Catalysis depends on charge relay system residues K79 and S159. S183 (acyl-ester intermediate) is an active-site residue.

The protein belongs to the amidase family. GatA subfamily. As to quaternary structure, heterotrimer of A, B and C subunits.

The catalysed reaction is L-glutamyl-tRNA(Gln) + L-glutamine + ATP + H2O = L-glutaminyl-tRNA(Gln) + L-glutamate + ADP + phosphate + H(+). Functionally, allows the formation of correctly charged Gln-tRNA(Gln) through the transamidation of misacylated Glu-tRNA(Gln) in organisms which lack glutaminyl-tRNA synthetase. The reaction takes place in the presence of glutamine and ATP through an activated gamma-phospho-Glu-tRNA(Gln). This chain is Glutamyl-tRNA(Gln) amidotransferase subunit A, found in Brucella suis biovar 1 (strain 1330).